The primary structure comprises 248 residues: Adenosylcobinamide-GDP ribazoletransferase (248 aa).

A run of 7 helical transmembrane segments spans residues 24–44 (EINL…IGAW), 70–90 (IIIT…GLFS), 106–126 (VGAN…SLFL), 134–154 (IGWL…LLFA), 168–188 (IFLG…LVAL), 189–209 (GAFF…FTII), and 228–248 (AGGQ…WGLI).

It belongs to the CobS family. Requires Mg(2+) as cofactor.

It localises to the cell membrane. It catalyses the reaction alpha-ribazole + adenosylcob(III)inamide-GDP = adenosylcob(III)alamin + GMP + H(+). The enzyme catalyses alpha-ribazole 5'-phosphate + adenosylcob(III)inamide-GDP = adenosylcob(III)alamin 5'-phosphate + GMP + H(+). It participates in cofactor biosynthesis; adenosylcobalamin biosynthesis; adenosylcobalamin from cob(II)yrinate a,c-diamide: step 7/7. Its function is as follows. Joins adenosylcobinamide-GDP and alpha-ribazole to generate adenosylcobalamin (Ado-cobalamin). Also synthesizes adenosylcobalamin 5'-phosphate from adenosylcobinamide-GDP and alpha-ribazole 5'-phosphate. The protein is Adenosylcobinamide-GDP ribazoletransferase of Listeria monocytogenes serotype 4b (strain F2365).